A 307-amino-acid polypeptide reads, in one-letter code: Protease HtpX homolog (307 aa).

2 helical membrane passes run 10–30 (VITILAGIGIALLFSLIAYGL) and 40–60 (ISIIYFLLIFVLFIDIIQWLV). Histidine 144 is a Zn(2+) binding site. Residue glutamate 145 is part of the active site. Histidine 148 contributes to the Zn(2+) binding site. The next 2 helical transmembrane spans lie at 156–176 (LLLAIGLIPTLIFYLGYSMIF) and 187–207 (FFLVAIILFILSSVFNIMILG). Glutamate 213 lines the Zn(2+) pocket.

This sequence belongs to the peptidase M48B family. It depends on Zn(2+) as a cofactor.

The protein localises to the cell membrane. The chain is Protease HtpX homolog from Picrophilus torridus (strain ATCC 700027 / DSM 9790 / JCM 10055 / NBRC 100828 / KAW 2/3).